The following is a 297-amino-acid chain: 4-hydroxy-tetrahydrodipicolinate synthase (297 aa).

Threonine 55 contacts pyruvate. Tyrosine 144 serves as the catalytic Proton donor/acceptor. The active-site Schiff-base intermediate with substrate is the lysine 172. A pyruvate-binding site is contributed by isoleucine 213.

Belongs to the DapA family. As to quaternary structure, homotetramer; dimer of dimers.

Its subcellular location is the cytoplasm. It carries out the reaction L-aspartate 4-semialdehyde + pyruvate = (2S,4S)-4-hydroxy-2,3,4,5-tetrahydrodipicolinate + H2O + H(+). It functions in the pathway amino-acid biosynthesis; L-lysine biosynthesis via DAP pathway; (S)-tetrahydrodipicolinate from L-aspartate: step 3/4. In terms of biological role, catalyzes the condensation of (S)-aspartate-beta-semialdehyde [(S)-ASA] and pyruvate to 4-hydroxy-tetrahydrodipicolinate (HTPA). The polypeptide is 4-hydroxy-tetrahydrodipicolinate synthase (Lactococcus lactis subsp. cremoris (strain SK11)).